Here is a 207-residue protein sequence, read N- to C-terminus: MTMDGDSSTTDASQLGISADYIGGSHYVIQPHDDTEDSMNDHEDTNGSKESFREQDIYLPIANVARIMKNAIPQTGKIAKDAKECVQECVSEFISFITSEASERCHQEKRKTINGEDILFAMSTLGFDSYVEPLKLYLQKFREAMKGEKGIGGAVSATDGLSEELTEEAFTNQLPAGLITADGQQQNVMVYTTSYQQISGVQQIQFS.

The segment at 1 to 52 (MTMDGDSSTTDASQLGISADYIGGSHYVIQPHDDTEDSMNDHEDTNGSKESF) is a domain. The interval 27-52 (YVIQPHDDTEDSMNDHEDTNGSKESF) is disordered. The segment covering 39–52 (MNDHEDTNGSKESF) has biased composition (basic and acidic residues). Positions 53–142 (REQDIYLPIA…PLKLYLQKFR (90 aa)) are b domain. The DNA-binding element occupies 59–65 (LPIANVA). A subunit association domain (SAD) region spans residues 86–97 (VQECVSEFISFI). Residue K140 forms a Glycyl lysine isopeptide (Lys-Gly) (interchain with G-Cter in ubiquitin) linkage. A c domain region spans residues 143 to 207 (EAMKGEKGIG…ISGVQQIQFS (65 aa)).

The protein belongs to the NFYB/HAP3 subunit family. As to quaternary structure, heterotrimeric transcription factor composed of three components, NF-YA, NF-YB and NF-YC. NF-YB and NF-YC must interact and dimerize for NF-YA association and DNA binding. Interacts with C1QBP. Monoubiquitination at Lys-140 plays an important role in transcriptional activation by allowing the deposition of histone H3 methylations as well as histone H2B monoubiquitination at 'Lys-121'.

It localises to the nucleus. In terms of biological role, component of the sequence-specific heterotrimeric transcription factor (NF-Y) which specifically recognizes a 5'-CCAAT-3' box motif found in the promoters of its target genes. NF-Y can function as both an activator and a repressor, depending on its interacting cofactors. The chain is Nuclear transcription factor Y subunit beta (Nfyb) from Mus musculus (Mouse).